The primary structure comprises 471 residues: Ribosomal protein uS12 methylthiotransferase RimO (471 aa).

Positions 23 to 138 constitute an MTTase N-terminal domain; that stretch reads PKIGFVSLGC…VMDAVHVHVP (116 aa). Positions 32, 68, 97, 169, 173, and 176 each coordinate [4Fe-4S] cluster. The Radical SAM core domain maps to 155–396; it reads LTPRHYAYLK…MAVAEAVSAE (242 aa). Positions 399 to 471 constitute a TRAM domain; that stretch reads RERVGAEMQV…QGHDLVGQPL (73 aa).

The protein belongs to the methylthiotransferase family. RimO subfamily. [4Fe-4S] cluster serves as cofactor.

The protein resides in the cytoplasm. The enzyme catalyses L-aspartate(89)-[ribosomal protein uS12]-hydrogen + (sulfur carrier)-SH + AH2 + 2 S-adenosyl-L-methionine = 3-methylsulfanyl-L-aspartate(89)-[ribosomal protein uS12]-hydrogen + (sulfur carrier)-H + 5'-deoxyadenosine + L-methionine + A + S-adenosyl-L-homocysteine + 2 H(+). In terms of biological role, catalyzes the methylthiolation of an aspartic acid residue of ribosomal protein uS12. This is Ribosomal protein uS12 methylthiotransferase RimO from Methylibium petroleiphilum (strain ATCC BAA-1232 / LMG 22953 / PM1).